A 354-amino-acid polypeptide reads, in one-letter code: Guanine nucleotide-binding protein alpha-3 subunit (354 aa).

Residue G2 is the site of N-myristoyl glycine attachment. C4 carries S-palmitoyl cysteine lipidation. The 322-residue stretch at 33 to 354 (KECKILLLGS…TNALKDSGIL (322 aa)) folds into the G-alpha domain. Positions 36–49 (KILLLGSGESGKST) are G1 motif. GTP-binding positions include 41-48 (GSGESGKS), 177-183 (LRARSKT), 202-206 (DVGGQ), 271-274 (NKID), and A326. Mg(2+) is bound by residues S48 and T183. The G2 motif stretch occupies residues 175–183 (DVLRARSKT). The G3 motif stretch occupies residues 198 to 207 (IHLFDVGGQR). Positions 267-274 (ILFLNKID) are G4 motif. A G5 motif region spans residues 324-329 (TQATDT).

Belongs to the G-alpha family. G proteins are composed of 3 units; alpha, beta and gamma. The alpha chain contains the guanine nucleotide binding site.

Its function is as follows. Guanine nucleotide-binding proteins (G proteins) are involved as modulators or transducers in various transmembrane signaling systems. GPA3 plays an active role in transmission of the pheromone signal. This Mycosarcoma maydis (Corn smut fungus) protein is Guanine nucleotide-binding protein alpha-3 subunit (GPA3).